Here is a 265-residue protein sequence, read N- to C-terminus: uncharacterized protein (265 aa).

A coiled-coil region spans residues 143-205 (ATQKALKDSI…EKLIKSVEKA (63 aa)).

This is an uncharacterized protein from Aquifex aeolicus (strain VF5).